A 63-amino-acid polypeptide reads, in one-letter code: Large ribosomal subunit protein bL28c (63 aa).

Belongs to the bacterial ribosomal protein bL28 family.

The protein resides in the plastid. The protein localises to the chloroplast. In Pyropia yezoensis (Susabi-nori), this protein is Large ribosomal subunit protein bL28c.